The sequence spans 381 residues: Cytochrome b (381 aa).

A run of 4 helical transmembrane segments spans residues F33 to M53, W77 to V98, W113 to L133, and F178 to T198. Residues H83 and H97 each contribute to the heme b site. Residues H182 and H196 each coordinate heme b. H201 contributes to the a ubiquinone binding site. 4 helical membrane passes run I226–S246, L288–H308, I320–G340, and F347–P367.

The protein belongs to the cytochrome b family. In terms of assembly, the cytochrome bc1 complex contains 11 subunits: 3 respiratory subunits (MT-CYB, CYC1 and UQCRFS1), 2 core proteins (UQCRC1 and UQCRC2) and 6 low-molecular weight proteins (UQCRH/QCR6, UQCRB/QCR7, UQCRQ/QCR8, UQCR10/QCR9, UQCR11/QCR10 and a cleavage product of UQCRFS1). This cytochrome bc1 complex then forms a dimer. It depends on heme b as a cofactor.

It localises to the mitochondrion inner membrane. In terms of biological role, component of the ubiquinol-cytochrome c reductase complex (complex III or cytochrome b-c1 complex) that is part of the mitochondrial respiratory chain. The b-c1 complex mediates electron transfer from ubiquinol to cytochrome c. Contributes to the generation of a proton gradient across the mitochondrial membrane that is then used for ATP synthesis. This chain is Cytochrome b (MT-CYB), found in Sminthopsis youngsoni (Lesser hairy-footed dunnart).